Here is a 37-residue protein sequence, read N- to C-terminus: Large ribosomal subunit protein bL36 (37 aa).

It belongs to the bacterial ribosomal protein bL36 family.

The sequence is that of Large ribosomal subunit protein bL36 from Brevibacillus brevis (strain 47 / JCM 6285 / NBRC 100599).